The following is a 476-amino-acid chain: Cytochrome c oxidase subunit 1 (476 aa).

The chain crosses the membrane as a helical span at residues 19–39 (LYYLWFSFLFGSYGFLLSVIL). Position 42 (Glu42) interacts with Ca(2+). The next 8 helical transmembrane spans lie at 61–81 (MIFT…GLFG), 105–125 (ISLL…AAEF), 151–171 (VIIF…LNFI), 194–214 (LIIT…GVLM), 240–260 (LFWF…FGVI), 278–298 (MILA…HHMY), 310–330 (FTST…NWIC), and 345–365 (LLSL…VILG). Residue His66 participates in Fe(II)-heme a binding. His246 contributes to the Cu cation binding site. Positions 246-250 (HPEVY) form a cross-link, 1'-histidyl-3'-tyrosine (His-Tyr). Tyr250 is a binding site for O2. Residues His295 and His296 each contribute to the Cu cation site. His374 and Asp375 together coordinate Mg(2+). 2 consecutive transmembrane segments (helical) span residues 379 to 399 (VIAH…FTTV) and 415 to 435 (SIVI…FLPM). His382 contacts heme a3. His384 serves as a coordination point for Fe(II)-heme a. Pro448 lines the Ca(2+) pocket. The helical transmembrane segment at 455–475 (NGWNMICSIGSTMTLFGLLIF) threads the bilayer.

This sequence belongs to the heme-copper respiratory oxidase family. In terms of assembly, component of the cytochrome c oxidase (complex IV, CIV), a multisubunit enzyme composed of a catalytic core of 3 subunits and several supernumerary subunits. The complex exists as a monomer or a dimer and forms supercomplexes (SCs) in the inner mitochondrial membrane with ubiquinol-cytochrome c oxidoreductase (cytochrome b-c1 complex, complex III, CIII). Heme is required as a cofactor. Requires Cu cation as cofactor.

The protein resides in the mitochondrion inner membrane. It carries out the reaction 4 Fe(II)-[cytochrome c] + O2 + 8 H(+)(in) = 4 Fe(III)-[cytochrome c] + 2 H2O + 4 H(+)(out). The protein operates within energy metabolism; oxidative phosphorylation. Its function is as follows. Component of the cytochrome c oxidase, the last enzyme in the mitochondrial electron transport chain which drives oxidative phosphorylation. The respiratory chain contains 3 multisubunit complexes succinate dehydrogenase (complex II, CII), ubiquinol-cytochrome c oxidoreductase (cytochrome b-c1 complex, complex III, CIII) and cytochrome c oxidase (complex IV, CIV), that cooperate to transfer electrons derived from NADH and succinate to molecular oxygen, creating an electrochemical gradient over the inner membrane that drives transmembrane transport and the ATP synthase. Cytochrome c oxidase is the component of the respiratory chain that catalyzes the reduction of oxygen to water. Electrons originating from reduced cytochrome c in the intermembrane space (IMS) are transferred via the dinuclear copper A center (CU(A)) of subunit 2 and heme A of subunit 1 to the active site in subunit 1, a binuclear center (BNC) formed by heme A3 and copper B (CU(B)). The BNC reduces molecular oxygen to 2 water molecules using 4 electrons from cytochrome c in the IMS and 4 protons from the mitochondrial matrix. The sequence is that of Cytochrome c oxidase subunit 1 (MT-CO1) from Plasmodium falciparum.